The chain runs to 1252 residues: Fanconi anemia group J protein homolog (1252 aa).

In terms of domain architecture, Helicase ATP-binding spans 11-452; it reads GGVKIMFPCK…KDHEQLRAMC (442 aa). Residues 164–181 carry the Nuclear localization signal motif; sequence RKRIRPLETEQQVRKRHC. 191–198 serves as a coordination point for ATP; sequence ALEVYNQR. [4Fe-4S] cluster contacts are provided by cysteine 292, cysteine 308, cysteine 320, and cysteine 360. Residues 403–406 carry the DEAH box motif; sequence DEAH. Disordered regions lie at residues 919 to 1008 and 1212 to 1252; these read SKEP…DRTN and TNGE…STST. Composition is skewed to polar residues over residues 920-930 and 952-969; these read KEPSSASQQEA and HLTTTINSINPGPSNQPG. The span at 989-1008 shows a compositional bias: basic and acidic residues; that stretch reads MDSTPRRPANKTEKKSDRTN. Over residues 1215 to 1224 the composition is skewed to acidic residues; the sequence is EEAEQVESQE. Positions 1228–1239 are enriched in basic residues; sequence KKRKISLSRSRN.

Belongs to the DEAD box helicase family. DEAH subfamily. Requires [4Fe-4S] cluster as cofactor.

The protein localises to the nucleus. The catalysed reaction is Couples ATP hydrolysis with the unwinding of duplex DNA at the replication fork by translocating in the 5'-3' direction. This creates two antiparallel DNA single strands (ssDNA). The leading ssDNA polymer is the template for DNA polymerase III holoenzyme which synthesizes a continuous strand.. It catalyses the reaction ATP + H2O = ADP + phosphate + H(+). In terms of biological role, DNA-dependent helicase and 5' to 3' DNA helicase required for the maintenance of chromosomal stability. Involved in the repair of DNA double-strand breaks by homologous recombination. Involved in the repair of abasic sites at replication forks by promoting the degradation of DNA-protein cross-links: acts by catalyzing unfolding of HMCES DNA-protein cross-link via its helicase activity, exposing the underlying DNA and enabling cleavage of the DNA-protein adduct by the SPRTN metalloprotease. The polypeptide is Fanconi anemia group J protein homolog (BRIP1) (Gallus gallus (Chicken)).